The primary structure comprises 101 residues: Large ribosomal subunit protein bL21 (101 aa).

Belongs to the bacterial ribosomal protein bL21 family. Part of the 50S ribosomal subunit. Contacts protein L20.

In terms of biological role, this protein binds to 23S rRNA in the presence of protein L20. The protein is Large ribosomal subunit protein bL21 of Micrococcus luteus (strain ATCC 4698 / DSM 20030 / JCM 1464 / CCM 169 / CCUG 5858 / IAM 1056 / NBRC 3333 / NCIMB 9278 / NCTC 2665 / VKM Ac-2230) (Micrococcus lysodeikticus).